We begin with the raw amino-acid sequence, 97 residues long: Co-chaperonin GroES (97 aa).

Belongs to the GroES chaperonin family. In terms of assembly, heptamer of 7 subunits arranged in a ring. Interacts with the chaperonin GroEL.

Its subcellular location is the cytoplasm. Together with the chaperonin GroEL, plays an essential role in assisting protein folding. The GroEL-GroES system forms a nano-cage that allows encapsulation of the non-native substrate proteins and provides a physical environment optimized to promote and accelerate protein folding. GroES binds to the apical surface of the GroEL ring, thereby capping the opening of the GroEL channel. This is Co-chaperonin GroES from Elusimicrobium minutum (strain Pei191).